Here is a 197-residue protein sequence, read N- to C-terminus: Probable host range protein 2 (197 aa).

Positions 172 to 197 (DHDDNDNADDDEEDDDEVNDIEDDYE) are disordered. The segment covering 174–197 (DDNDNADDDEEDDDEVNDIEDDYE) has biased composition (acidic residues).

The protein belongs to the poxviridae C7 protein family.

This chain is Probable host range protein 2, found in Ovis aries (Sheep).